A 294-amino-acid chain; its full sequence is 2-dehydro-3-deoxy-phosphogluconate/2-dehydro-3-deoxy-6-phosphogalactonate aldolase (294 aa).

Substrate is bound by residues Thr43–Thr44, Tyr130–Tyr132, and Lys155–Thr157. Lys155 serves as the catalytic Schiff-base intermediate with substrate.

This sequence belongs to the DapA family. KDPG aldolase subfamily. As to quaternary structure, homotetramer; dimer of dimers.

The enzyme catalyses 2-dehydro-3-deoxy-6-phospho-D-gluconate = D-glyceraldehyde 3-phosphate + pyruvate. It carries out the reaction 2-dehydro-3-deoxy-6-phospho-D-galactonate = D-glyceraldehyde 3-phosphate + pyruvate. It functions in the pathway carbohydrate acid metabolism; 2-dehydro-3-deoxy-D-gluconate degradation; D-glyceraldehyde 3-phosphate and pyruvate from 2-dehydro-3-deoxy-D-gluconate: step 2/2. Involved in the degradation of glucose and galactose via the Entner-Doudoroff pathway. Catalyzes the reversible cleavage of 2-keto-3-deoxy-6-phosphogluconate (KDPG) and 2-keto-3-deoxygluconate (KDG) forming pyruvate and glyceraldehyde 3-phosphate or glyceraldehyde, respectively. It is also able to catalyze the reversible cleavage of 2-keto-3-deoxy-6-phosphogalactonate (KDPGal) and 2-keto-3-deoxygalactonate (KDGal). It is equally active with both D- and L-glyceraldehyde. This is 2-dehydro-3-deoxy-phosphogluconate/2-dehydro-3-deoxy-6-phosphogalactonate aldolase from Saccharolobus solfataricus (Sulfolobus solfataricus).